The primary structure comprises 187 residues: Probable DNA endonuclease SmrA (187 aa).

The region spanning 88–169 (LNLLRQPVEE…GSGACYVALR (82 aa)) is the Smr domain.

Has DNA endonuclease activity. Binds DNA. This chain is Probable DNA endonuclease SmrA (smrA), found in Escherichia coli (strain K12).